The chain runs to 551 residues: Cation/acetate symporter ActP (551 aa).

The next 14 helical transmembrane spans lie at 5 to 25 (HWSA…ALTG), 34 to 54 (IQAI…TYWA), 77 to 97 (GLAI…SALV), 104 to 124 (GLIY…LIAE), 150 to 170 (LSAC…MVGA), 184 to 204 (VAVV…GMLA), 207 to 227 (WVQI…AIMV), 263 to 283 (ISAL…PHIL), 304 to 324 (GFIG…ILLV), 356 to 376 (FFLG…VAGL), 406 to 426 (VSKI…ILFE), 430 to 450 (IAFM…PIII), 469 to 489 (LGLS…VTIL), and 498 to 518 (YEYP…FFSI).

The protein belongs to the sodium:solute symporter (SSF) (TC 2.A.21) family.

Its subcellular location is the cell inner membrane. In terms of biological role, transports acetate. In Yersinia pseudotuberculosis serotype IB (strain PB1/+), this protein is Cation/acetate symporter ActP.